A 188-amino-acid chain; its full sequence is MKQLLDFIPLVVFFAAYKLYDIYIASGALIAATALSLAVTWMMYRKIEKMTLVTFAMVVVFGSLTLVFHNDLFIKWKVTIIYALFAVALLVSQFVMKQTLIQKMLGKELTLPQSVWGKLNFAWAMFFLVCGLVNIYIAFWLPQSVWVNFKVFGLTGVTLLFTLICGVYIYRHLPGDQEKPEEEKSEQP.

5 helical membrane-spanning segments follow: residues 22–42 (IYIASGALIAATALSLAVTWM), 50–70 (MTLVTFAMVVVFGSLTLVFHN), 72–92 (LFIKWKVTIIYALFAVALLVS), 121–141 (FAWAMFFLVCGLVNIYIAFWL), and 149–169 (FKVFGLTGVTLLFTLICGVYI).

Belongs to the YciB family.

The protein localises to the cell inner membrane. In terms of biological role, plays a role in cell envelope biogenesis, maintenance of cell envelope integrity and membrane homeostasis. The polypeptide is Inner membrane-spanning protein YciB (Pectobacterium carotovorum subsp. carotovorum (strain PC1)).